The primary structure comprises 158 residues: UPF0262 protein RHOS4_22360 (158 aa).

It belongs to the UPF0262 family.

The chain is UPF0262 protein RHOS4_22360 from Cereibacter sphaeroides (strain ATCC 17023 / DSM 158 / JCM 6121 / CCUG 31486 / LMG 2827 / NBRC 12203 / NCIMB 8253 / ATH 2.4.1.) (Rhodobacter sphaeroides).